A 389-amino-acid polypeptide reads, in one-letter code: Abscission/NoCut checkpoint regulator (389 aa).

The FYVE-type zinc finger occupies 1 to 58 (MESRCYGCAVKFTLFKKEYGCKNCGRAFCNGCLSFSALVPRAGNTQQKVCKQCHTILT). Residues Cys5, Cys8, Cys21, Cys24, Cys29, Cys32, Cys50, and Cys53 each coordinate Zn(2+). Ser69 is modified (phosphoserine). Residues 99–112 (DQAIAERLARLRQE) carry the MIM1-A motif. Residue Lys132 forms a Glycyl lysine isopeptide (Lys-Gly) (interchain with G-Cter in SUMO2) linkage. Disordered regions lie at residues 158-177 (PSHT…QAQQ) and 204-227 (QNDL…SQSL). Residues 167–177 (QAPDTRTQAQQ) show a composition bias toward low complexity. Polar residues predominate over residues 214-226 (SQRTNSQGQASQS). Ser219 is modified (phosphoserine). A coiled-coil region spans residues 226-261 (SLEEEKYKLLAEAAVELQEENTRQERILALAKRLAV). The MIM1-B motif lies at 252–265 (ILALAKRLAVLKGQ). At Ser280 the chain carries Phosphoserine.

Interacts (via MIM1-B) with VPS4A; interaction takes place at the midbody ring following cytokinesis checkpoint activation.

The protein resides in the cytoplasm. It is found in the cytoskeleton. Its subcellular location is the microtubule organizing center. It localises to the centrosome. The protein localises to the cleavage furrow. The protein resides in the midbody. It is found in the midbody ring. In terms of biological role, key regulator of abscission step in cytokinesis: part of the cytokinesis checkpoint, a process required to delay abscission to prevent both premature resolution of intercellular chromosome bridges and accumulation of DNA damage. Together with CHMP4C, required to retain abscission-competent VPS4 (VPS4A and/or VPS4B) at the midbody ring until abscission checkpoint signaling is terminated at late cytokinesis. Deactivation of AURKB results in dephosphorylation of CHMP4C followed by its dissociation from ZFYVE19/ANCHR and VPS4 and subsequent abscission. This is Abscission/NoCut checkpoint regulator (Zfyve19) from Mus musculus (Mouse).